The following is a 313-amino-acid chain: tRNA dimethylallyltransferase (313 aa).

10–17 (GPTASGKT) is a binding site for ATP. 12 to 17 (TASGKT) serves as a coordination point for substrate. Interaction with substrate tRNA regions lie at residues 35 to 38 (DSAM), 159 to 163 (QRIQR), and 240 to 245 (RCVGYR).

This sequence belongs to the IPP transferase family. As to quaternary structure, monomer. Mg(2+) is required as a cofactor.

It catalyses the reaction adenosine(37) in tRNA + dimethylallyl diphosphate = N(6)-dimethylallyladenosine(37) in tRNA + diphosphate. Catalyzes the transfer of a dimethylallyl group onto the adenine at position 37 in tRNAs that read codons beginning with uridine, leading to the formation of N6-(dimethylallyl)adenosine (i(6)A). The sequence is that of tRNA dimethylallyltransferase from Legionella pneumophila (strain Corby).